The following is a 344-amino-acid chain: Photosystem II protein D1 (344 aa).

N-acetylthreonine is present on Thr2. Position 2 is a phosphothreonine (Thr2). The next 3 helical transmembrane spans lie at 29 to 46 (YIGWFGCLMIPTLLTATS), 118 to 133 (HFFLGICAYMGREWEL), and 142 to 156 (WIAVAYSAPVAAATA). Residue His118 participates in chlorophyll a binding. Tyr126 contributes to the pheophytin a binding site. Positions 170 and 189 each coordinate [CaMn4O5] cluster. Residues 197–218 (FHMLGVAGVFGGSLFSAMHGSL) form a helical membrane-spanning segment. Residue His198 participates in chlorophyll a binding. Residues His215 and 264–265 (SF) each bind a quinone. Residue His215 coordinates Fe cation. A Fe cation-binding site is contributed by His272. The helical transmembrane segment at 274 to 288 (FLAAWPVIGIWFTAL) threads the bilayer. 4 residues coordinate [CaMn4O5] cluster: His332, Glu333, Asp342, and Ala344.

It belongs to the reaction center PufL/M/PsbA/D family. In terms of assembly, PSII is composed of 1 copy each of membrane proteins PsbA, PsbB, PsbC, PsbD, PsbE, PsbF, PsbH, PsbI, PsbJ, PsbK, PsbL, PsbM, PsbT, PsbX, PsbY, PsbZ, Psb30/Ycf12, at least 3 peripheral proteins of the oxygen-evolving complex and a large number of cofactors. It forms dimeric complexes. Requires The D1/D2 heterodimer binds P680, chlorophylls that are the primary electron donor of PSII, and subsequent electron acceptors. It shares a non-heme iron and each subunit binds pheophytin, quinone, additional chlorophylls, carotenoids and lipids. D1 provides most of the ligands for the Mn4-Ca-O5 cluster of the oxygen-evolving complex (OEC). There is also a Cl(-1) ion associated with D1 and D2, which is required for oxygen evolution. The PSII complex binds additional chlorophylls, carotenoids and specific lipids. as cofactor. In terms of processing, tyr-161 forms a radical intermediate that is referred to as redox-active TyrZ, YZ or Y-Z.

The protein resides in the plastid. It localises to the chloroplast thylakoid membrane. The catalysed reaction is 2 a plastoquinone + 4 hnu + 2 H2O = 2 a plastoquinol + O2. Its function is as follows. Photosystem II (PSII) is a light-driven water:plastoquinone oxidoreductase that uses light energy to abstract electrons from H(2)O, generating O(2) and a proton gradient subsequently used for ATP formation. It consists of a core antenna complex that captures photons, and an electron transfer chain that converts photonic excitation into a charge separation. The D1/D2 (PsbA/PsbD) reaction center heterodimer binds P680, the primary electron donor of PSII as well as several subsequent electron acceptors. The sequence is that of Photosystem II protein D1 from Pleurastrum terricola (Filamentous green alga).